The sequence spans 330 residues: Flotillin-like protein FloA (330 aa).

The next 2 helical transmembrane spans lie at Leu6–Val26 and Val28–Gly48.

The protein belongs to the flotillin-like FloA family. In terms of assembly, homooligomerizes.

It localises to the cell membrane. It is found in the membrane raft. Its function is as follows. Found in functional membrane microdomains (FMM) that may be equivalent to eukaryotic membrane rafts. FMMs are highly dynamic and increase in number as cells age. Flotillins are thought to be important factors in membrane fluidity. In Bacillus licheniformis (strain ATCC 14580 / DSM 13 / JCM 2505 / CCUG 7422 / NBRC 12200 / NCIMB 9375 / NCTC 10341 / NRRL NRS-1264 / Gibson 46), this protein is Flotillin-like protein FloA.